Reading from the N-terminus, the 283-residue chain is Probable protein phosphatase 2C 17 (283 aa).

One can recognise a PPM-type phosphatase domain in the interval 32–282 (KYGFSLIKGK…DDISCIVVRF (251 aa)). The Mn(2+) site is built by Asp-69, Gly-70, Asp-234, and Asp-273.

This sequence belongs to the PP2C family. Requires Mg(2+) as cofactor. Mn(2+) serves as cofactor.

It catalyses the reaction O-phospho-L-seryl-[protein] + H2O = L-seryl-[protein] + phosphate. It carries out the reaction O-phospho-L-threonyl-[protein] + H2O = L-threonyl-[protein] + phosphate. This chain is Probable protein phosphatase 2C 17, found in Arabidopsis thaliana (Mouse-ear cress).